The sequence spans 122 residues: Large ribosomal subunit protein uL14 (122 aa).

It belongs to the universal ribosomal protein uL14 family. As to quaternary structure, part of the 50S ribosomal subunit. Forms a cluster with proteins L3 and L19. In the 70S ribosome, L14 and L19 interact and together make contacts with the 16S rRNA in bridges B5 and B8.

In terms of biological role, binds to 23S rRNA. Forms part of two intersubunit bridges in the 70S ribosome. This is Large ribosomal subunit protein uL14 from Desulfatibacillum aliphaticivorans.